A 67-amino-acid chain; its full sequence is uncharacterized protein (67 aa).

A helical membrane pass occupies residues 4 to 24 (WIFAILMLGVAIVLSIIATFF).

It localises to the membrane. This is an uncharacterized protein from Bacillus anthracis.